We begin with the raw amino-acid sequence, 877 residues long: Dolichyl-phosphate-mannose--protein mannosyltransferase 1 (877 aa).

N-linked (GlcNAc...) asparagine glycosylation is present at Asn83. The next 2 membrane-spanning stretches (helical) occupy residues 109–129 (FFMDVHPPLAKMLFGAVGAIG) and 150–170 (YIFMRQFPALLGVGTVILCYL). N-linked (GlcNAc...) asparagine glycosylation occurs at Asn195. 4 helical membrane-spanning segments follow: residues 196 to 216 (VTISRYILLDSPLIFFIAAAI), 226 to 246 (IPFTFGWYRSLLATGIALGLA), 252 to 272 (VGLFTVAWVGFLCIYQLWFLI), and 291 to 311 (IILLGVPIALYLGFFAIHFQL). Residues 340-394 (TEQVGLGSVVTIRHVDTQGGYLHSHEHFYQTGSKQQQITLYPHLDSNNKWLIEPY) enclose the MIR 1 domain. Asn395 and Asn400 each carry an N-linked (GlcNAc...) asparagine glycan. MIR domains are found at residues 403–462 (FVPL…VEIV) and 472–528 (QTFV…IETN). 4 consecutive transmembrane segments (helical) span residues 604–624 (TWWAATLSIITFGTYVLVTVF), 643–663 (VQTFSYVLGWALHYLPFFIMG), 666–686 (LFLHHYLPALYFGILALGHFF), and 700–720 (FQQVAFVLVGLFSILSLVFYV). Asn721 is a glycosylation site (N-linked (GlcNAc...) asparagine). Residues 778–877 (VVEAKQTPKA…EDESVHQVQQ (100 aa)) form a disordered region. Composition is skewed to basic and acidic residues over residues 783–799 (QTPKAEPKLAKQDDHIE), 807–816 (VEEKEVKEEV), and 847–857 (NDEKSVEEKQQ).

It belongs to the glycosyltransferase 39 family. As to quaternary structure, PMT1 and PMT2 form a functional heterodimer.

It localises to the endoplasmic reticulum membrane. It catalyses the reaction a di-trans,poly-cis-dolichyl beta-D-mannosyl phosphate + L-seryl-[protein] = 3-O-(alpha-D-mannosyl)-L-seryl-[protein] + a di-trans,poly-cis-dolichyl phosphate + H(+). The catalysed reaction is a di-trans,poly-cis-dolichyl beta-D-mannosyl phosphate + L-threonyl-[protein] = 3-O-(alpha-D-mannosyl)-L-threonyl-[protein] + a di-trans,poly-cis-dolichyl phosphate + H(+). Its pathway is protein modification; protein glycosylation. Functionally, protein mannosyltransferase (PMT) involved in hyphal growth and drug sensitivity. Transfers mannose from Dol-P-mannose to Ser or Thr residues on proteins. PMT1, PMT2 and PMT4 account for most of the protein-O-glycosylation activity, while PMT5 and PMT6 may specifically modulate a much narrower spectrum of target proteins. Accounts for the O-glycosylation of the cell wall proteins KRE9, PIR2, RHD3, and ALS1, as well as the SEC20 t-SNARE component. O-glycosylation of SEC20 is essential for its stability. Required for filamentation and early phases of biofilm formation. The sequence is that of Dolichyl-phosphate-mannose--protein mannosyltransferase 1 (PMT1) from Candida albicans (strain SC5314 / ATCC MYA-2876) (Yeast).